A 631-amino-acid chain; its full sequence is MITDLRPPAMEPAELIWQDGVPESARFGDVYFSRDDGLAETRYVFIERNGLPGRFAELDRNSHFVIAETGFGTGLNFLATWAEWLAQRPDDQDHAILHFISVERYPLALADLEKALESWPGLQPLARELIDNYPPLIKGTHRLVLGGGAIRLTLCFGDVLDAWNELEFVADAWFLDGFAPSLNPDMWLEKAIHQIRAHSQPGTTLATFTSVGRVRRALADEGFEMAKVPGFGRKREMLTGRLPTSEDVSAPTVGTDPIVIIGAGIAGAALARNLAERGVPVVLADQASGPGAGASGNDQGALYVKLGVEYNDQTELAATALSFSQRFYQRWQGEFWHPSGLLQLAATDQEQDRQRRFLERNTYPENMLAAVTAAEASRIAGMPVQCEGLWFPSSGWIQPARACQTLIDHPHIRTVFDFNVDTLRYVDNHWVIKASDGRSLRATKVVVAAGHESGSLAPVPDGQSLRLKPIRGQVTRLPADDCQLPDVVVCGTKYLNPAYDGSAITGATFDLRDDNPEPTPEGHQENLDQLRELLPSVNISKHIQAEHLEGRVAFRCATHDYQPVAGPCPDNNEISRTGVYLLTGLGSKGLVWAPLLAEYLADRICQQPACLNTRLARRVETGRLYRNQLTV.

The segment at 1 to 243 (MITDLRPPAM…KREMLTGRLP (243 aa)) is tRNA (mnm(5)s(2)U34)-methyltransferase. The interval 261 to 631 (IGAGIAGAAL…GRLYRNQLTV (371 aa)) is FAD-dependent cmnm(5)s(2)U34 oxidoreductase.

The protein in the N-terminal section; belongs to the methyltransferase superfamily. tRNA (mnm(5)s(2)U34)-methyltransferase family. In the C-terminal section; belongs to the DAO family. Requires FAD as cofactor.

It localises to the cytoplasm. It carries out the reaction 5-aminomethyl-2-thiouridine(34) in tRNA + S-adenosyl-L-methionine = 5-methylaminomethyl-2-thiouridine(34) in tRNA + S-adenosyl-L-homocysteine + H(+). In terms of biological role, catalyzes the last two steps in the biosynthesis of 5-methylaminomethyl-2-thiouridine (mnm(5)s(2)U) at the wobble position (U34) in tRNA. Catalyzes the FAD-dependent demodification of cmnm(5)s(2)U34 to nm(5)s(2)U34, followed by the transfer of a methyl group from S-adenosyl-L-methionine to nm(5)s(2)U34, to form mnm(5)s(2)U34. In Marinobacter nauticus (strain ATCC 700491 / DSM 11845 / VT8) (Marinobacter aquaeolei), this protein is tRNA 5-methylaminomethyl-2-thiouridine biosynthesis bifunctional protein MnmC.